Reading from the N-terminus, the 998-residue chain is Regulator of telomere elongation helicase 1 homolog (998 aa).

The Helicase ATP-binding domain occupies 7–324 (AGIPVHFPFE…KEMLLELEKA (318 aa)). 42 to 49 (SPTGTGKT) provides a ligand contact to ATP. [4Fe-4S] cluster is bound by residues C148, C166, C175, and C211. A DEAH box motif is present at residues 254–257 (DEAH). A disordered region spans residues 426–454 (QNAGKPAPKQQQQGGWLGKGNNTSNSSSS). Residue T887 is modified to Phosphothreonine.

Belongs to the helicase family. RAD3/XPD subfamily.

The protein resides in the nucleus. The catalysed reaction is ATP + H2O = ADP + phosphate + H(+). Functionally, a probable ATP-dependent DNA helicase implicated in DNA repair and the maintenance of genomic stability. Acts as an anti-recombinase to counteract toxic recombination and limit crossover during meiosis. Regulates meiotic recombination and crossover homeostasis by physically dissociating strand invasion events and thereby promotes noncrossover repair by meiotic synthesis dependent strand annealing (SDSA) as well as disassembly of D loop recombination intermediates. This is Regulator of telomere elongation helicase 1 homolog from Drosophila willistoni (Fruit fly).